The following is a 407-amino-acid chain: Shaggy-related protein kinase iota (407 aa).

The segment covering 1-19 has biased composition (low complexity); the sequence is MASLPLGPQPHALAPPLQL. Residues 1-23 form a disordered region; sequence MASLPLGPQPHALAPPLQLHDGD. N-acetylalanine is present on alanine 2. In terms of domain architecture, Protein kinase spans 70–354; sequence YMAERVVGTG…ALEACAHPFF (285 aa). ATP contacts are provided by residues 76–84 and lysine 99; that span reads VGTGSFGIV. Aspartate 195 (proton acceptor) is an active-site residue. A Phosphotyrosine modification is found at tyrosine 230.

This sequence belongs to the protein kinase superfamily. CMGC Ser/Thr protein kinase family. GSK-3 subfamily. As to quaternary structure, binds to KIB1. Interacts with BSK6. Post-translationally, autophosphorylated mainly on threonine and serine residues.

The catalysed reaction is L-seryl-[protein] + ATP = O-phospho-L-seryl-[protein] + ADP + H(+). It carries out the reaction L-threonyl-[protein] + ATP = O-phospho-L-threonyl-[protein] + ADP + H(+). In terms of biological role, phosphorylates BSK1, BSK3, BSK5, BSK6, BSK8 and BSK11 in vitro. May mediate extracellular signals to regulate transcription in differentiating cells. The chain is Shaggy-related protein kinase iota (ASK9) from Arabidopsis thaliana (Mouse-ear cress).